Reading from the N-terminus, the 308-residue chain is ABC transporter protein AbcA (308 aa).

The region spanning 6 to 245 is the ABC transporter domain; sequence LAVSGVNKSF…YHKLLHMEGD (240 aa). ATP is bound at residue 58 to 65; it reads GHNGAGKS.

The protein belongs to the ABC transporter superfamily.

Its function is as follows. Influences the expression of the surface array protein gene (vapA). May have both regulatory and transport activities. The chain is ABC transporter protein AbcA (abcA) from Aeromonas salmonicida.